The following is an 883-amino-acid chain: Aryl hydrocarbon receptor (883 aa).

A propeptide spanning residues 1-9 (MSSGANITY) is cleaved from the precursor. Positions 1–38 (MSSGANITYASRKRRKPVQKTVKPIPAEGIKSNPSKRH) are disordered. Short sequence motifs (nuclear localization signal) lie at residues 12 to 15 (RKRR) and 36 to 41 (KRHRDR). Residues 26-79 (PAEGIKSNPSKRHRDRLNTELDRLASLLPFPQDVINKLDKLSVLRLSVSYLRAK) enclose the bHLH domain. Residues 37 to 65 (RHRDRLNTELDRLASLLPFPQDVINKLDK) form a DNA-binding region. 3 required for maintaining the overall integrity of the AHR:ARNT heterodimer and its transcriptional activity regions span residues 49-81 (LASLLPFPQDVINKLDKLSVLRLSVSYLRAKSF), 116-124 (LLQALNGFV), and 260-262 (FAI). Positions 63-71 (LDKLSVLRL) match the Nuclear export signal motif. Residues 111-175 (QEGEFLLQAL…AEFQRQLHWA (65 aa)) enclose the PAS 1 domain. In terms of domain architecture, PAS 2 spans 266-336 (LQPPSILEIR…CAESHIRMIK (71 aa)). The region spanning 342–383 (MTVFRLLAKHSRWRWVQSNARLIYRNGRPDYIIATQRPLTDE) is the PAC domain. The segment at 421–449 (LPIRTKSNTSRKDWAPQSTPSKDSFHPSS) is disordered. Residues 436–449 (PQSTPSKDSFHPSS) show a composition bias toward polar residues.

Homodimer. Heterodimer; efficient DNA binding requires dimerization with another bHLH protein. Interacts with ARNT; the heterodimer ARNT:AHR binds to core DNA sequence 5'-TGCGTG-3' within the dioxin response element (DRE) of target gene promoters and activates their transcription. Binds MYBBP1A. Interacts with coactivators including SRC-1, RIP140 and NOCA7, and with the corepressor SMRT. Interacts with NEDD8 and IVNS1ABP. Interacts with BMAL1. Interacts with HSP90AB1. Interacts with TIPARP; leading to mono-ADP-ribosylation of AHR and subsequent inhibition of AHR. Post-translationally, mono-ADP-ribosylated, leading to inhibit transcription activator activity of AHR.

It is found in the cytoplasm. The protein localises to the nucleus. Functionally, ligand-activated transcription factor that enables cells to adapt to changing conditions by sensing compounds from the environment, diet, microbiome and cellular metabolism, and which plays important roles in development, immunity and cancer. Upon ligand binding, translocates into the nucleus, where it heterodimerizes with ARNT and induces transcription by binding to xenobiotic response elements (XRE). Regulates a variety of biological processes, including angiogenesis, hematopoiesis, drug and lipid metabolism, cell motility and immune modulation. Xenobiotics can act as ligands: upon xenobiotic-binding, activates the expression of multiple phase I and II xenobiotic chemical metabolizing enzyme genes (such as the CYP1A1 gene). Mediates biochemical and toxic effects of halogenated aromatic hydrocarbons. Next to xenobiotics, natural ligands derived from plants, microbiota, and endogenous metabolism are potent AHR agonists. Tryptophan (Trp) derivatives constitute an important class of endogenous AHR ligands. Acts as a negative regulator of anti-tumor immunity: indoles and kynurenic acid generated by Trp catabolism act as ligand and activate AHR, thereby promoting AHR-driven cancer cell motility and suppressing adaptive immunity. Regulates the circadian clock by inhibiting the basal and circadian expression of the core circadian component PER1. Inhibits PER1 by repressing the CLOCK-BMAL1 heterodimer mediated transcriptional activation of PER1. The heterodimer ARNT:AHR binds to core DNA sequence 5'-TGCGTG-3' within the dioxin response element (DRE) of target gene promoters and activates their transcription. The protein is Aryl hydrocarbon receptor (Ahr) of Mus musculus molossinus (Japanese house mouse).